The following is a 199-amino-acid chain: Recombination protein RecR (199 aa).

The segment at 57 to 72 (CQSCRTYTEETLCPIC) adopts a C4-type zinc-finger fold. One can recognise a Toprim domain in the interval 81–176 (STICVVETPA…MISRIAHGVP (96 aa)).

Belongs to the RecR family.

May play a role in DNA repair. It seems to be involved in an RecBC-independent recombinational process of DNA repair. It may act with RecF and RecO. The sequence is that of Recombination protein RecR from Shewanella baltica (strain OS195).